Consider the following 429-residue polypeptide: tRNA threonylcarbamoyladenosine dehydratase 1 (429 aa).

Transmembrane regions (helical) follow at residues 3-23 (NNTWKLIATTALISVFSTQLA) and 74-94 (EQYIVIVGAGEVGSWVCTMLI). At Ser-259 the chain carries Phosphoserine. A helical transmembrane segment spans residues 279 to 299 (LPELGTMPGIFGLSIATWILT).

The protein belongs to the HesA/MoeB/ThiF family.

It is found in the mitochondrion outer membrane. Its function is as follows. Catalyzes the ATP-dependent dehydration of threonylcarbamoyladenosine at position 37 (t(6)A37) to form cyclic t(6)A37 (ct(6)A37) in tRNAs that read codons beginning with adenine. The polypeptide is tRNA threonylcarbamoyladenosine dehydratase 1 (TCD1) (Saccharomyces cerevisiae (strain ATCC 204508 / S288c) (Baker's yeast)).